The sequence spans 273 residues: Nitrogenase iron protein (273 aa).

ATP is bound at residue 8–15 (GKGGIGKS). C95 is a binding site for [4Fe-4S] cluster. R98 is modified (ADP-ribosylarginine; by dinitrogenase reductase ADP-ribosyltransferase). Position 130 (C130) interacts with [4Fe-4S] cluster.

This sequence belongs to the NifH/BchL/ChlL family. Homodimer. It depends on [4Fe-4S] cluster as a cofactor. The reversible ADP-ribosylation of Arg-98 inactivates the nitrogenase reductase and regulates nitrogenase activity.

The catalysed reaction is N2 + 8 reduced [2Fe-2S]-[ferredoxin] + 16 ATP + 16 H2O = H2 + 8 oxidized [2Fe-2S]-[ferredoxin] + 2 NH4(+) + 16 ADP + 16 phosphate + 6 H(+). Its function is as follows. The key enzymatic reactions in nitrogen fixation are catalyzed by the nitrogenase complex, which has 2 components: the iron protein and the molybdenum-iron protein. The protein is Nitrogenase iron protein of Roseiflexus sp. (strain RS-1).